Consider the following 508-residue polypeptide: Amphoterin-induced protein 3 (508 aa).

The N-terminal stretch at 1–19 (MAWLVLSGILLCMLGAGLG) is a signal peptide. Topologically, residues 20 to 383 (TSDLEDVLPP…ARPEPETFNT (364 aa)) are extracellular. Residues 25-61 (DVLPPAPHNCPDICICAADVLSCAGRGLQDLPVALPT) enclose the LRRNT domain. Cystine bridges form between C34/C40 and C38/C47. 6 LRR repeats span residues 62 to 83 (TAAE…WLAP), 86 to 107 (RLRA…AFTN), 110 to 133 (GLRT…DGLE), 134 to 155 (ELEK…AFQG), 158 to 178 (MLSH…NHLH), and 184 to 207 (RLRT…AALP). Residue N107 is glycosylated (N-linked (GlcNAc...) asparagine). An N-linked (GlcNAc...) asparagine glycan is attached at N142. An LRRCT domain is found at 219 to 275 (NPLPCDCSLYHLLRRWHQRGLSALHDFEREYTCLVFKVSESRVRFFEHSRVFKNCSV). Intrachain disulfides connect C223/C251, C225/C273, and C300/C352. Residues N272, N301, N362, and N368 are each glycosylated (N-linked (GlcNAc...) asparagine). The region spanning 279–370 (PGLELPEEQL…HNQTLEYNVS (92 aa)) is the Ig-like C2-type domain. A helical transmembrane segment spans residues 384-404 (GFTTLLGCIVGLVLVLLYLFA). The Cytoplasmic portion of the chain corresponds to 405–508 (PPCRGCCHCC…STGSEGLVMS (104 aa)).

Belongs to the immunoglobulin superfamily. AMIGO family. Binds AMIGO1 or AMIGO2. Ubiquitous.

It localises to the membrane. Functionally, may mediate heterophilic cell-cell interaction. May contribute to signal transduction through its intracellular domain. This is Amphoterin-induced protein 3 from Mus musculus (Mouse).